A 602-amino-acid polypeptide reads, in one-letter code: VIN3-like protein 1 (602 aa).

Residues 1–38 form a disordered region; it reads MDSSSTKSKISHSRKTNKKSNKKHESNGKQQQQQDVDG. Basic residues predominate over residues 9–22; the sequence is KISHSRKTNKKSNK. A PHD-type zinc finger spans residues 67–137; that stretch reads RCSCCVCHNF…CFCCYSCGKV (71 aa). Residues 144-151 carry the Nuclear localization signal motif; that stretch reads WKKQLVAA. In terms of domain architecture, Fibronectin type-III spans 242 to 340; that stretch reads VPAACRFHFE…AMCFTKSVEI (99 aa). Positions 430-470 are disordered; that stretch reads LNEEFTPPDSSGGEDNGVPLNSLAEADGGDHDDNCDDAVSN. The interval 502–602 is VIN3-Interacting Domain (VID); sequence AISDSNDSEN…RPNNGVMTSH (101 aa).

Interacts with VIN3 and VIL2. The heterodimer made of VIN3 and VIL1 is required for establishing the vernalization-induced epigenetic silencing of FLC. Component of the plant homeodomain / polycomb repressive complex 2 (PHD-PRC2) large complex during prolonged cold, composed of core PRC2 components (VRN2, EZA1, FIE and MSI1), and three related PHD finger proteins (VIL1, VIL2 and VIN3) that mediates histone H3 trimethylation on 'Lys-27' (H3K27me3). As to expression, accumulates in shoot and root apices, and in leaves.

Its subcellular location is the nucleus. It localises to the nucleus speckle. Its function is as follows. Involved in both the vernalization and photoperiod pathways by regulating expression of the related floral repressors FLOWERING LOCUS C (FLC) and FLOWERING LOCUS M (FLM). Together with VIN3, required during vernalization for the modifications of FLC and FLM chromatin that are associated with an epigenetically silenced state (e.g. chromatin modifications, histone deacetylation, and trimethylated H3 'Lys-4' H3K4me3 and 'Lys-27' H3K27me3) and with acquisition of competence to flower. Promotes flowering in short days (SD=8 hours light/16 hours dark). Associates dynamically at FLC locus; during vernalization, binds to specific sites, but when in warm conditions, distributed along the whole locus. In Arabidopsis thaliana (Mouse-ear cress), this protein is VIN3-like protein 1 (VIL1).